The following is a 156-amino-acid chain: Small ribosomal subunit protein uS7 (156 aa).

It belongs to the universal ribosomal protein uS7 family. As to quaternary structure, part of the 30S ribosomal subunit. Contacts proteins S9 and S11.

Its function is as follows. One of the primary rRNA binding proteins, it binds directly to 16S rRNA where it nucleates assembly of the head domain of the 30S subunit. Is located at the subunit interface close to the decoding center, probably blocks exit of the E-site tRNA. The sequence is that of Small ribosomal subunit protein uS7 from Brucella anthropi (strain ATCC 49188 / DSM 6882 / CCUG 24695 / JCM 21032 / LMG 3331 / NBRC 15819 / NCTC 12168 / Alc 37) (Ochrobactrum anthropi).